The sequence spans 170 residues: Transmembrane protein 252 (170 aa).

A run of 2 helical transmembrane segments spans residues 8-28 (ILCA…AFFI) and 40-60 (LIAA…GIFW). The interval 112–147 (CPAEREASGIPPPLYTETGLEFQDGNDSHPEAPPSY) is disordered.

Its subcellular location is the membrane. The sequence is that of Transmembrane protein 252 (TMEM252) from Pongo abelii (Sumatran orangutan).